The following is a 434-amino-acid chain: Histidinol dehydrogenase (434 aa).

Positions 242, 264, and 267 each coordinate substrate. Zn(2+)-binding residues include Gln-264 and His-267. Active-site proton acceptor residues include Glu-332 and His-333. Substrate is bound by residues His-333, Asp-366, Glu-420, and His-425. Residue Asp-366 coordinates Zn(2+). Residue His-425 coordinates Zn(2+).

Belongs to the histidinol dehydrogenase family. It depends on Zn(2+) as a cofactor.

The catalysed reaction is L-histidinol + 2 NAD(+) + H2O = L-histidine + 2 NADH + 3 H(+). It functions in the pathway amino-acid biosynthesis; L-histidine biosynthesis; L-histidine from 5-phospho-alpha-D-ribose 1-diphosphate: step 9/9. Functionally, catalyzes the sequential NAD-dependent oxidations of L-histidinol to L-histidinaldehyde and then to L-histidine. The chain is Histidinol dehydrogenase from Oleidesulfovibrio alaskensis (strain ATCC BAA-1058 / DSM 17464 / G20) (Desulfovibrio alaskensis).